An 88-amino-acid polypeptide reads, in one-letter code: U-scoloptoxin(12)-Sa1a (88 aa).

The N-terminal stretch at 1 to 20 (MKYMIITVVILFTCALKMFC) is a signal peptide.

The protein belongs to the scoloptoxin-12 family. In terms of processing, contains 3 disulfide bonds. In terms of tissue distribution, expressed by the venom gland.

The protein localises to the secreted. The protein is U-scoloptoxin(12)-Sa1a of Scolopendra alternans (Florida Keys giant centipede).